A 239-amino-acid chain; its full sequence is tRNA (guanine-N(1)-)-methyltransferase (239 aa).

S-adenosyl-L-methionine contacts are provided by residues glycine 110 and 130–135; that span reads VGDYVL.

The protein belongs to the RNA methyltransferase TrmD family. In terms of assembly, homodimer.

It is found in the cytoplasm. It carries out the reaction guanosine(37) in tRNA + S-adenosyl-L-methionine = N(1)-methylguanosine(37) in tRNA + S-adenosyl-L-homocysteine + H(+). Functionally, specifically methylates guanosine-37 in various tRNAs. This chain is tRNA (guanine-N(1)-)-methyltransferase, found in Borrelia turicatae (strain 91E135).